We begin with the raw amino-acid sequence, 1099 residues long: SLIT-ROBO Rho GTPase-activating protein 3 (1099 aa).

The F-BAR domain occupies 19 to 314 (AQIKEIRTQL…AVDNLDSRSD (296 aa)). The disordered stretch occupies residues 205–225 (HEDRPQRRSSVKKIEKMKEKR). The stretch at 352–392 (QTELLMRYHQLQSRLATLKIENEEVRKTLDATMQTLQDMLT) forms a coiled coil. The disordered stretch occupies residues 471–493 (ERAECGTTRPPCLPPKPQKMRRP). Positions 506–694 (GSMEAFIKDS…TIIIHHEAIF (189 aa)) constitute a Rho-GAP domain. An SH3 domain is found at 744-803 (VEQIEAIAKFDYMGRSPRELSFKKGASLLLYHRASEDWWEGRHNGVDGLIPHQYIVVQDM). Positions 809–820 (DSLSQKADSEAS) are enriched in polar residues. Residues 809–847 (DSLSQKADSEASSGPLLDDKASSKNDLQSPTEHISDYGF) form a disordered region. Residues Ser817, Ser820, Ser821, Ser837, and Ser858 each carry the phosphoserine modification. Disordered stretches follow at residues 861-911 (AAIP…SPEK) and 926-950 (PDKKALSEGHSMRSTCGSTRHSSLG). Over residues 926–936 (PDKKALSEGHS) the composition is skewed to basic and acidic residues. Over residues 937–947 (MRSTCGSTRHS) the composition is skewed to polar residues. A coiled-coil region spans residues 952 to 987 (HKSLEAEALAEDIEKTMSTALHELRELERQNTVKQA). Ser954 is subject to Phosphoserine. Positions 995-1099 (LEPLKNPPGP…NSSADKSGTM (105 aa)) are disordered. Composition is skewed to low complexity over residues 1026–1038 (RRSSSSSTEMMTT) and 1060–1074 (VRPVVQHRSSSSSSS). A compositionally biased stretch (polar residues) spans 1089–1099 (PNSSADKSGTM).

As to quaternary structure, homodimer. Forms a heterooligomer with SRGAP1 and SRGAP2 through its F-BAR domain. Interacts with WASF1. Probably interacts with ROBO1. Interacts with FASLG. As to expression, highly expressed in adult and fetal brain. Expressed at low levels in kidney. Isoform 3 is expressed in the kidney but is absent in the brain.

Its function is as follows. GTPase-activating protein for RAC1 and perhaps Cdc42, but not for RhoA small GTPase. May attenuate RAC1 signaling in neurons. The polypeptide is SLIT-ROBO Rho GTPase-activating protein 3 (SRGAP3) (Homo sapiens (Human)).